Here is a 328-residue protein sequence, read N- to C-terminus: Purple acid phosphatase 7 (328 aa).

The N-terminal stretch at 1–24 (MKMHVCFSVILMFLSIFFINGALS) is a signal peptide. Aspartate 48 is a Fe cation binding site. An N-linked (GlcNAc...) asparagine glycan is attached at asparagine 56. Residues aspartate 81 and tyrosine 84 each coordinate Fe cation. Position 81 (aspartate 81) interacts with Zn(2+). Zn(2+)-binding residues include asparagine 119 and histidine 213. The Proton donor role is filled by histidine 222. Zn(2+) is bound at residue histidine 248. 248–250 (HDH) contributes to the substrate binding site. Histidine 250 contacts Fe cation.

It belongs to the metallophosphoesterase superfamily. Purple acid phosphatase family. As to quaternary structure, homodimer. Requires Fe cation as cofactor. Zn(2+) serves as cofactor. As to expression, expressed in roots, stems, leaves, flowers and siliques.

It is found in the secreted. It catalyses the reaction a phosphate monoester + H2O = an alcohol + phosphate. The chain is Purple acid phosphatase 7 (PAP7) from Arabidopsis thaliana (Mouse-ear cress).